A 921-amino-acid chain; its full sequence is Alanine--tRNA ligase (921 aa).

Residues H602, H606, C706, and H710 each coordinate Zn(2+).

It belongs to the class-II aminoacyl-tRNA synthetase family. It depends on Zn(2+) as a cofactor.

It localises to the cytoplasm. The catalysed reaction is tRNA(Ala) + L-alanine + ATP = L-alanyl-tRNA(Ala) + AMP + diphosphate. Functionally, catalyzes the attachment of alanine to tRNA(Ala) in a two-step reaction: alanine is first activated by ATP to form Ala-AMP and then transferred to the acceptor end of tRNA(Ala). Also edits incorrectly charged Ser-tRNA(Ala) and Gly-tRNA(Ala) via its editing domain. The protein is Alanine--tRNA ligase of Hyperthermus butylicus (strain DSM 5456 / JCM 9403 / PLM1-5).